A 164-amino-acid polypeptide reads, in one-letter code: Anterior gradient protein 3 (164 aa).

The signal sequence occupies residues M1 to A19. A Prevents secretion from ER motif is present at residues Q161–L164.

It belongs to the AGR family.

It is found in the endoplasmic reticulum. Its subcellular location is the cytoplasm. Functionally, required for calcium-mediated regulation of ciliary beat frequency in the airway. This is Anterior gradient protein 3 from Xenopus tropicalis (Western clawed frog).